A 355-amino-acid chain; its full sequence is Protein RecA (355 aa).

An ATP-binding site is contributed by 69 to 76; the sequence is GPESSGKT. The segment at 329 to 355 is disordered; that stretch reads AYGLPDREETKREETAQIPDTEKTKDV.

It belongs to the RecA family.

The protein resides in the cytoplasm. In terms of biological role, can catalyze the hydrolysis of ATP in the presence of single-stranded DNA, the ATP-dependent uptake of single-stranded DNA by duplex DNA, and the ATP-dependent hybridization of homologous single-stranded DNAs. It interacts with LexA causing its activation and leading to its autocatalytic cleavage. This is Protein RecA from Desulfotalea psychrophila (strain LSv54 / DSM 12343).